A 264-amino-acid polypeptide reads, in one-letter code: Movement protein (264 aa).

The interval 219-264 (PSYRSRSQSVGGRGKRHSKPPNRRLDSASEESSSVSFEDGLQSDHT) is disordered. Residues 231–240 (RGKRHSKPPN) are compositionally biased toward basic residues.

Belongs to the tobamovirus movement protein family.

Its subcellular location is the host cytoplasm. The protein localises to the host cytoskeleton. It localises to the host cell junction. The protein resides in the host plasmodesma. In terms of biological role, transports viral genome to neighboring plant cells directly through plasmosdesmata, without any budding. The movement protein allows efficient cell to cell propagation, by bypassing the host cell wall barrier. Forms a ribonucleoprotein complex with viral RNA. Binds microtubules and modulates microtubule stability. Can bind double-stranded DNA. The protein is Movement protein (MP) of Cucumber green mottle mosaic virus (strain watermelon SH) (CGMMV).